A 295-amino-acid chain; its full sequence is 4-hydroxy-tetrahydrodipicolinate synthase (295 aa).

Residue Thr45 coordinates pyruvate. Tyr131 serves as the catalytic Proton donor/acceptor. The active-site Schiff-base intermediate with substrate is Lys159. Val202 contributes to the pyruvate binding site.

This sequence belongs to the DapA family. In terms of assembly, homotetramer; dimer of dimers.

Its subcellular location is the cytoplasm. It carries out the reaction L-aspartate 4-semialdehyde + pyruvate = (2S,4S)-4-hydroxy-2,3,4,5-tetrahydrodipicolinate + H2O + H(+). The protein operates within amino-acid biosynthesis; L-lysine biosynthesis via DAP pathway; (S)-tetrahydrodipicolinate from L-aspartate: step 3/4. Catalyzes the condensation of (S)-aspartate-beta-semialdehyde [(S)-ASA] and pyruvate to 4-hydroxy-tetrahydrodipicolinate (HTPA). This Methanothrix thermoacetophila (strain DSM 6194 / JCM 14653 / NBRC 101360 / PT) (Methanosaeta thermophila) protein is 4-hydroxy-tetrahydrodipicolinate synthase.